We begin with the raw amino-acid sequence, 371 residues long: uncharacterized protein (371 aa).

Residue 33–40 coordinates ATP; the sequence is GPLNSGKT.

It belongs to the archaeal ATPase family.

This is an uncharacterized protein from Methanocaldococcus jannaschii (strain ATCC 43067 / DSM 2661 / JAL-1 / JCM 10045 / NBRC 100440) (Methanococcus jannaschii).